The following is a 150-amino-acid chain: Transcriptional repressor NrdR (150 aa).

The segment at 3–34 (CPFCGYEETKVLDSRPVSNGTSIRRRRECLQC) is a zinc-finger region. An ATP-cone domain is found at 49–139 (IRIIKKDGRR…VYKEFRDLDS (91 aa)).

Belongs to the NrdR family. The cofactor is Zn(2+).

In terms of biological role, negatively regulates transcription of bacterial ribonucleotide reductase nrd genes and operons by binding to NrdR-boxes. The sequence is that of Transcriptional repressor NrdR from Petrotoga mobilis (strain DSM 10674 / SJ95).